The primary structure comprises 843 residues: Beta-mannosidase B (843 aa).

Residue glutamate 430 is the Proton donor of the active site. N-linked (GlcNAc...) asparagine glycosylation occurs at asparagine 721.

Belongs to the glycosyl hydrolase 2 family. Beta-mannosidase B subfamily.

It carries out the reaction Hydrolysis of terminal, non-reducing beta-D-mannose residues in beta-D-mannosides.. Its pathway is glycan metabolism; N-glycan degradation. Functionally, exoglycosidase that cleaves the single beta-linked mannose residue from the non-reducing end of beta-mannosidic oligosaccharides of various complexity and length. Prefers mannobiose over mannotriose and has no activity against polymeric mannan. Is also severely restricted by galactosyl substitutions at the +1 subsite. This chain is Beta-mannosidase B (mndB), found in Aspergillus terreus (strain NIH 2624 / FGSC A1156).